A 620-amino-acid polypeptide reads, in one-letter code: DNA mismatch repair protein MutL (620 aa).

This sequence belongs to the DNA mismatch repair MutL/HexB family.

This protein is involved in the repair of mismatches in DNA. It is required for dam-dependent methyl-directed DNA mismatch repair. May act as a 'molecular matchmaker', a protein that promotes the formation of a stable complex between two or more DNA-binding proteins in an ATP-dependent manner without itself being part of a final effector complex. This chain is DNA mismatch repair protein MutL, found in Clostridium tetani (strain Massachusetts / E88).